Reading from the N-terminus, the 272-residue chain is Rhomboid-type serine protease B (272 aa).

Helical transmembrane passes span 30 to 50 (LVLL…WSVV), 72 to 92 (PFIH…TPLL), 103 to 123 (TAVA…YILV), 133 to 153 (AVVG…IKTF), 164 to 184 (TKIP…IFVP), and 186 to 206 (TSFL…LGYL). S138 serves as the catalytic Nucleophile. H191 is a catalytic residue.

It belongs to the peptidase S54 family.

It is found in the membrane. It carries out the reaction Cleaves type-1 transmembrane domains using a catalytic dyad composed of serine and histidine that are contributed by different transmembrane domains.. In terms of biological role, rhomboid protease that catalyzes intramembrane proteolysis. Required for transcription factor srbA activation by mediating its release from the membrane and thereby regulating its activity under hypoxic conditions. Essential for iron homeostasis and resistance to azoles such as voriconazole. Required for virulence in murine models of invasive pulmonary aspergillosis (IPA). In Aspergillus fumigatus (strain ATCC MYA-4609 / CBS 101355 / FGSC A1100 / Af293) (Neosartorya fumigata), this protein is Rhomboid-type serine protease B.